The primary structure comprises 174 residues: Serine protease 2 (174 aa).

The cysteines at positions 15 and 36 are disulfide-linked. Catalysis depends on charge relay system residues histidine 35, aspartate 65, and serine 147. Cysteines 141 and 168 form a disulfide.

Belongs to the peptidase S1 family.

It localises to the secreted. Functionally, broad substrate specificity. The sequence is that of Serine protease 2 from Streptomyces fradiae (Streptomyces roseoflavus).